We begin with the raw amino-acid sequence, 320 residues long: Pyrroline-5-carboxylate reductase 2 (320 aa).

Ser2 carries the N-acetylserine modification. Residues 6–11 (IGAGQL) and Ser34 each bind NADP(+). 9 residues coordinate NADPH: Ala8, Gln10, Leu11, Ser34, Glu36, Asn56, Val70, Lys71, and Ala97. Residues Asn56, 69-72 (AVKP), and 95-97 (CAA) contribute to the NADP(+) site. Residue Glu164 coordinates L-proline. NADPH is bound at residue Asn230. 2 residues coordinate L-proline: Ala237 and Thr238. Residues 298–320 (TTLTPTSSGKLLTRSPVPGGKKD) form a disordered region. Residue Ser304 is modified to Phosphoserine.

It belongs to the pyrroline-5-carboxylate reductase family. Homodecamer; composed of 5 homodimers. Interacts with LTO1.

The protein localises to the cytoplasm. The protein resides in the mitochondrion. It catalyses the reaction L-proline + NADP(+) = (S)-1-pyrroline-5-carboxylate + NADPH + 2 H(+). The enzyme catalyses L-proline + NAD(+) = (S)-1-pyrroline-5-carboxylate + NADH + 2 H(+). It functions in the pathway amino-acid biosynthesis; L-proline biosynthesis; L-proline from L-glutamate 5-semialdehyde: step 1/1. In terms of biological role, oxidoreductase that catalyzes the last step in proline biosynthesis, which corresponds to the reduction of pyrroline-5-carboxylate to L-proline using NAD(P)H. At physiologic concentrations, has higher specific activity in the presence of NADH. Involved in cellular response to oxidative stress. In some cell types, such as erythrocytes, its primary function may be the generation of NADP(+). This is Pyrroline-5-carboxylate reductase 2 (PYCR2) from Bos taurus (Bovine).